Consider the following 778-residue polypeptide: Ral guanine nucleotide dissociation stimulator-like 2 (778 aa).

The span at 1–15 (MLPRPLRLLLDTTPP) shows a compositional bias: low complexity. The interval 1–59 (MLPRPLRLLLDTTPPGGVVLSSFRSRDPEEGGDPGGRAVGGGQEEEDEEEEEASVSVWD) is disordered. A compositionally biased stretch (gly residues) spans 33 to 42 (DPGGRAVGGG). Residues 43 to 59 (QEEEDEEEEEASVSVWD) are compositionally biased toward acidic residues. An N-terminal Ras-GEF domain is found at 88–212 (SSRRLRAGTL…GSADLIRNLR (125 aa)). Positions 243-513 (LADHLAEQLT…HRVSCEVEPP (271 aa)) constitute a Ras-GEF domain. 4 disordered regions span residues 503 to 524 (SHRV…ARTP), 541 to 564 (GGPT…GTPA), 581 to 647 (SLDS…GPGS), and 735 to 769 (RRPS…IKAT). The segment covering 581–592 (SLDSALESSPSL) has biased composition (low complexity). The segment covering 620–632 (CGSPLSGNTGEGT) has biased composition (polar residues). The region spanning 649-736 (DCRIIRVQME…HDFLLRQRRR (88 aa)) is the Ras-associating domain. Residues 738–756 (SAATPGSHSGPSASGTPPS) are compositionally biased toward low complexity.

In terms of assembly, interacts with SAMD9.

Functionally, probable guanine nucleotide exchange factor. Putative effector of Ras and/or Rap. Associates with the GTP-bound form of Rap 1A and H-Ras in vitro. This Mus musculus (Mouse) protein is Ral guanine nucleotide dissociation stimulator-like 2 (Rgl2).